A 1074-amino-acid chain; its full sequence is DNA double-strand break repair Rad50 ATPase (1074 aa).

ATP contacts are provided by residues R12, 32–38 (NGSGKSS), and Q142. 2 coiled-coil regions span residues 355-402 (ELEK…REKA) and 452-506 (NLVE…KGLG). The 100-residue stretch at 512–611 (LENLEDFSEL…KITRLKDAKK (100 aa)) folds into the Zinc-hook domain. Zn(2+)-binding residues include C559 and C562. Coiled coils occupy residues 574 to 611 (TAEE…DAKK), 649 to 678 (LKLE…LQVQ), 749 to 823 (KEKL…EILE), and 865 to 895 (TEEK…LKAL). 973–978 (LLSGGE) is an ATP binding site.

This sequence belongs to the SMC family. RAD50 subfamily. As to quaternary structure, homodimer. Forms a heterotetramer composed of two Mre11 subunits and two Rad50 subunits. Zn(2+) serves as cofactor.

In terms of biological role, part of the Rad50/Mre11 complex, which is involved in the early steps of DNA double-strand break (DSB) repair. The complex may facilitate opening of the processed DNA ends to aid in the recruitment of HerA and NurA. Rad50 controls the balance between DNA end bridging and DNA resection via ATP-dependent structural rearrangements of the Rad50/Mre11 complex. This Methanosarcina acetivorans (strain ATCC 35395 / DSM 2834 / JCM 12185 / C2A) protein is DNA double-strand break repair Rad50 ATPase.